We begin with the raw amino-acid sequence, 409 residues long: Adenosine receptor A2a (409 aa).

The Extracellular segment spans residues 1-4 (MSSS). The helical transmembrane segment at 5-29 (VYITVELVIAVLAILGNVLVCWAVW) threads the bilayer. Over 30-39 (INSNLQNVTN) the chain is Cytoplasmic. A helical membrane pass occupies residues 40 to 63 (YFVVSLAAADIAVGVLAIPFAITI). Residues 64 to 74 (STGFCAACHGC) are Extracellular-facing. 3 cysteine pairs are disulfide-bonded: cysteine 68–cysteine 156, cysteine 71–cysteine 143, and cysteine 74–cysteine 163. A helical transmembrane segment spans residues 75-97 (LFFACFVLVLTQSSIFSLLTITI). Over 98 to 117 (DRYIAIRIPLRYNGLVTCTR) the chain is Cytoplasmic. Residues 118–140 (AKGIIAICWVLSFAIGLTPMLGW) traverse the membrane as a helical segment. The Extracellular segment spans residues 141-170 (NNCSQPKGDKNHSESCDEGQVTCLFEDVVP). Asparagine 142 and asparagine 151 each carry an N-linked (GlcNAc...) asparagine glycan. Glutamate 166 serves as a coordination point for adenosine. The helical transmembrane segment at 171-195 (MNYMVYYNFFAFVLVPLLLMLGIYL) threads the bilayer. At 196-231 (RIFLAARRQLKQMESQPLPGERTRSTLQKEVHPAKS) the chain is on the cytoplasmic side. A helical membrane pass occupies residues 232 to 255 (LAIIVGLFALCCLPLNIINCFTFF). Asparagine 250 provides a ligand contact to adenosine. Residues cysteine 256 and cysteine 259 are joined by a disulfide bond. Over 256-263 (CPECDHAP) the chain is Extracellular. The chain crosses the membrane as a helical span at residues 264–287 (PWLMYLTIILSHGNSVVNPLIYAY). Residues serine 274 and histidine 275 each coordinate adenosine. At 288–409 (RIREFRQTFR…PPAHGGAGVS (122 aa)) the chain is on the cytoplasmic side. Disordered regions lie at residues 316–336 (TSAR…LRLN) and 369–409 (QRSH…AGVS).

Belongs to the G-protein coupled receptor 1 family. Interacts (via cytoplasmic C-terminal domain) with USP4; the interaction is direct. May interact with DRD4. Interacts with NECAB2. Interacts (via cytoplasmic C-terminal domain) with GAS2L2; interaction enhances receptor-mediated adenylyl cyclase activity. Ubiquitinated. Deubiquitinated by USP4; leading to stabilization and expression at the cell surface.

Its subcellular location is the cell membrane. Receptor for adenosine. The activity of this receptor is mediated by G proteins which activate adenylyl cyclase. The polypeptide is Adenosine receptor A2a (ADORA2A) (Cavia porcellus (Guinea pig)).